A 169-amino-acid polypeptide reads, in one-letter code: Peptide methionine sulfoxide reductase MsrA (169 aa).

The active site involves Cys10.

It belongs to the MsrA Met sulfoxide reductase family.

It catalyses the reaction L-methionyl-[protein] + [thioredoxin]-disulfide + H2O = L-methionyl-(S)-S-oxide-[protein] + [thioredoxin]-dithiol. The catalysed reaction is [thioredoxin]-disulfide + L-methionine + H2O = L-methionine (S)-S-oxide + [thioredoxin]-dithiol. Has an important function as a repair enzyme for proteins that have been inactivated by oxidation. Catalyzes the reversible oxidation-reduction of methionine sulfoxide in proteins to methionine. The chain is Peptide methionine sulfoxide reductase MsrA from Streptococcus equi subsp. equi (strain 4047).